A 95-amino-acid chain; its full sequence is Aspartyl/glutamyl-tRNA(Asn/Gln) amidotransferase subunit C (95 aa).

Belongs to the GatC family. Heterotrimer of A, B and C subunits.

The enzyme catalyses L-glutamyl-tRNA(Gln) + L-glutamine + ATP + H2O = L-glutaminyl-tRNA(Gln) + L-glutamate + ADP + phosphate + H(+). It catalyses the reaction L-aspartyl-tRNA(Asn) + L-glutamine + ATP + H2O = L-asparaginyl-tRNA(Asn) + L-glutamate + ADP + phosphate + 2 H(+). Allows the formation of correctly charged Asn-tRNA(Asn) or Gln-tRNA(Gln) through the transamidation of misacylated Asp-tRNA(Asn) or Glu-tRNA(Gln) in organisms which lack either or both of asparaginyl-tRNA or glutaminyl-tRNA synthetases. The reaction takes place in the presence of glutamine and ATP through an activated phospho-Asp-tRNA(Asn) or phospho-Glu-tRNA(Gln). In Trichlorobacter lovleyi (strain ATCC BAA-1151 / DSM 17278 / SZ) (Geobacter lovleyi), this protein is Aspartyl/glutamyl-tRNA(Asn/Gln) amidotransferase subunit C.